The chain runs to 84 residues: Large ribosomal subunit protein bL27 (84 aa).

Residues 1 to 20 (MAHKKAGGSTRNGRDSHSKR) form a disordered region.

This sequence belongs to the bacterial ribosomal protein bL27 family.

This is Large ribosomal subunit protein bL27 from Blochmanniella pennsylvanica (strain BPEN).